The primary structure comprises 308 residues: Glutamyl-Q tRNA(Asp) synthetase (308 aa).

L-glutamate is bound by residues 19–23 (RFAPS) and Glu55. A 'HIGH' region motif is present at residues 22 to 32 (PSPSGELHFGS). Zn(2+) contacts are provided by Cys111, Cys113, Tyr125, and Cys129. L-glutamate is bound by residues Tyr182 and Arg200. Positions 238 to 242 (KLSKQ) match the 'KMSKS' region motif. Residue Lys241 participates in ATP binding.

It belongs to the class-I aminoacyl-tRNA synthetase family. GluQ subfamily. Zn(2+) serves as cofactor.

Functionally, catalyzes the tRNA-independent activation of glutamate in presence of ATP and the subsequent transfer of glutamate onto a tRNA(Asp). Glutamate is transferred on the 2-amino-5-(4,5-dihydroxy-2-cyclopenten-1-yl) moiety of the queuosine in the wobble position of the QUC anticodon. This Escherichia coli (strain K12 / MC4100 / BW2952) protein is Glutamyl-Q tRNA(Asp) synthetase.